The sequence spans 698 residues: Testis-specific gene 10 protein (698 aa).

Phosphoserine is present on Ser163. The tract at residues 556–689 (QMANERISMQ…SPDRGLDRSL (134 aa)) is interaction with HIF1A. The span at 659–670 (HMSSTMKPNTKC) shows a compositional bias: polar residues. The segment at 659–685 (HMSSTMKPNTKCHSPERAHHRSPDRGL) is disordered. Residues 671–685 (HSPERAHHRSPDRGL) are compositionally biased toward basic and acidic residues. Residue Ser688 is modified to Phosphoserine.

This sequence belongs to the CEP135/TSGA10 family. In terms of assembly, interacts with HIF1A. Processed into N-terminal 27-kDa and C-terminal 55-kDa fragments. Expressed in the testis, in spermatozoa (at protein level). Expressed in actively dividing fetal tissues, including sternum, intestine, limb, kidney and stomach.

The protein localises to the cytoplasm. It is found in the cytoskeleton. The protein resides in the microtubule organizing center. Its subcellular location is the centrosome. It localises to the centriole. Functionally, plays a role in spermatogenesis. When overexpressed, prevents nuclear localization of HIF1A. The chain is Testis-specific gene 10 protein (TSGA10) from Homo sapiens (Human).